Here is a 184-residue protein sequence, read N- to C-terminus: ATP-dependent protease subunit HslV (184 aa).

Threonine 12 is an active-site residue. Residues alanine 166, cysteine 169, and threonine 172 each contribute to the Na(+) site.

This sequence belongs to the peptidase T1B family. HslV subfamily. In terms of assembly, a double ring-shaped homohexamer of HslV is capped on each side by a ring-shaped HslU homohexamer. The assembly of the HslU/HslV complex is dependent on binding of ATP.

It localises to the cytoplasm. It carries out the reaction ATP-dependent cleavage of peptide bonds with broad specificity.. With respect to regulation, allosterically activated by HslU binding. In terms of biological role, protease subunit of a proteasome-like degradation complex believed to be a general protein degrading machinery. The chain is ATP-dependent protease subunit HslV from Brucella abortus (strain S19).